The sequence spans 524 residues: Peptide chain release factor 3 (524 aa).

The tr-type G domain occupies 9 to 275; the sequence is QRRRTFAIIS…AVVELSPPPL (267 aa). Residues 18 to 25, 86 to 90, and 140 to 143 each bind GTP; these read SHPDAGKT, DTPGH, and NKLD.

Belongs to the TRAFAC class translation factor GTPase superfamily. Classic translation factor GTPase family. PrfC subfamily.

The protein localises to the cytoplasm. In terms of biological role, increases the formation of ribosomal termination complexes and stimulates activities of RF-1 and RF-2. It binds guanine nucleotides and has strong preference for UGA stop codons. It may interact directly with the ribosome. The stimulation of RF-1 and RF-2 is significantly reduced by GTP and GDP, but not by GMP. This Methylobacillus flagellatus (strain ATCC 51484 / DSM 6875 / VKM B-1610 / KT) protein is Peptide chain release factor 3.